A 443-amino-acid polypeptide reads, in one-letter code: tRNA modification GTPase MnmE (443 aa).

Arg-23, Glu-82, and Lys-121 together coordinate (6S)-5-formyl-5,6,7,8-tetrahydrofolate. A TrmE-type G domain is found at Gly-215–Gln-364. Residue Asn-225 participates in K(+) binding. GTP is bound by residues Asn-225–Ser-230, Thr-244–Thr-250, and Asp-269–Gly-272. Ser-229 is a Mg(2+) binding site. Residues Thr-244, Ile-246, and Thr-249 each contribute to the K(+) site. Thr-250 contributes to the Mg(2+) binding site. Residue Lys-443 coordinates (6S)-5-formyl-5,6,7,8-tetrahydrofolate.

Belongs to the TRAFAC class TrmE-Era-EngA-EngB-Septin-like GTPase superfamily. TrmE GTPase family. As to quaternary structure, homodimer. Heterotetramer of two MnmE and two MnmG subunits. It depends on K(+) as a cofactor.

The protein localises to the cytoplasm. In terms of biological role, exhibits a very high intrinsic GTPase hydrolysis rate. Involved in the addition of a carboxymethylaminomethyl (cmnm) group at the wobble position (U34) of certain tRNAs, forming tRNA-cmnm(5)s(2)U34. This Chlamydia abortus (strain DSM 27085 / S26/3) (Chlamydophila abortus) protein is tRNA modification GTPase MnmE.